The following is a 362-amino-acid chain: Acetylglutamate kinase (362 aa).

A compositionally biased stretch (pro residues) spans 1–11; the sequence is MNAPTRTPPPS. The tract at residues 1-42 is disordered; sequence MNAPTRTPPPSNGGHGSTGSTGSTGDAAPGGGTGRGPAATAR. Substrate-binding positions include 106–107, Arg-128, and Asn-227; that span reads GG. Residues 329 to 362 are disordered; that stretch reads MAESGTSPEPGTPPAPAARPAGIVPAGEPTGGTP. The segment covering 346–355 has biased composition (low complexity); it reads ARPAGIVPAG.

Belongs to the acetylglutamate kinase family. ArgB subfamily.

It is found in the cytoplasm. The catalysed reaction is N-acetyl-L-glutamate + ATP = N-acetyl-L-glutamyl 5-phosphate + ADP. Its pathway is amino-acid biosynthesis; L-arginine biosynthesis; N(2)-acetyl-L-ornithine from L-glutamate: step 2/4. Catalyzes the ATP-dependent phosphorylation of N-acetyl-L-glutamate. This Frankia casuarinae (strain DSM 45818 / CECT 9043 / HFP020203 / CcI3) protein is Acetylglutamate kinase.